We begin with the raw amino-acid sequence, 229 residues long: Uracil-DNA glycosylase (229 aa).

Catalysis depends on D70, which acts as the Proton acceptor.

Belongs to the uracil-DNA glycosylase (UDG) superfamily. UNG family.

Its subcellular location is the cytoplasm. The catalysed reaction is Hydrolyzes single-stranded DNA or mismatched double-stranded DNA and polynucleotides, releasing free uracil.. Its function is as follows. Excises uracil residues from the DNA which can arise as a result of misincorporation of dUMP residues by DNA polymerase or due to deamination of cytosine. This chain is Uracil-DNA glycosylase, found in Chlamydia trachomatis serovar A (strain ATCC VR-571B / DSM 19440 / HAR-13).